A 657-amino-acid chain; its full sequence is Histidine ammonia-lyase (657 aa).

The 5-imidazolinone (Ala-Gly) cross-link spans 253 to 255; it reads ASG. 2,3-didehydroalanine (Ser) is present on Ser254. The residue at position 396 (Thr396) is a Phosphothreonine. The residue at position 635 (Ser635) is a Phosphoserine. A Phosphothreonine modification is found at Thr637. The residue at position 648 (Ser648) is a Phosphoserine.

The protein belongs to the PAL/histidase family. In terms of processing, contains an active site 4-methylidene-imidazol-5-one (MIO), which is formed autocatalytically by cyclization and dehydration of residues Ala-Ser-Gly.

The catalysed reaction is L-histidine = trans-urocanate + NH4(+). It functions in the pathway amino-acid degradation; L-histidine degradation into L-glutamate; N-formimidoyl-L-glutamate from L-histidine: step 1/3. This chain is Histidine ammonia-lyase (HAL), found in Bos taurus (Bovine).